The following is a 78-amino-acid chain: Beta-defensin 105A (78 aa).

The first 27 residues, 1 to 27 (MALIRKTFYFLFAVFFILVQLPSGCQA), serve as a signal peptide directing secretion. 3 disulfides stabilise this stretch: C46–C74, C53–C67, and C57–C73.

Belongs to the beta-defensin family.

It is found in the secreted. Functionally, has antimicrobial activity. In Hylobates lar (Lar gibbon), this protein is Beta-defensin 105A (DEFB105A).